The following is a 1273-amino-acid chain: Ribulose bisphosphate carboxylase small subunit, chloroplastic (1273 aa).

Residues M1–D134 constitute a chloroplast transit peptide. Propeptides lie at residues G269–D278, G412–D421, G556–D565, G699–D708, G844–E853, G987–D996, and G1131–E1140.

The protein belongs to the RuBisCO small chain family. Heterohexadecamer of 8 large and 8 small subunits. Eight small subunits are processed from a large polyprotein. All start with the same sequence but there is more heterogeneity at the C-terminus.

The protein localises to the plastid. Its subcellular location is the chloroplast. Functionally, ruBisCO catalyzes two reactions: the carboxylation of D-ribulose 1,5-bisphosphate, the primary event in carbon dioxide fixation, as well as the oxidative fragmentation of the pentose substrate. Both reactions occur simultaneously and in competition at the same active site. Although the small subunit is not catalytic it is essential for maximal activity. This is Ribulose bisphosphate carboxylase small subunit, chloroplastic from Euglena gracilis.